The primary structure comprises 89 residues: Small ribosomal subunit protein uS15 (89 aa).

It belongs to the universal ribosomal protein uS15 family. As to quaternary structure, part of the 30S ribosomal subunit. Forms a bridge to the 50S subunit in the 70S ribosome, contacting the 23S rRNA.

One of the primary rRNA binding proteins, it binds directly to 16S rRNA where it helps nucleate assembly of the platform of the 30S subunit by binding and bridging several RNA helices of the 16S rRNA. Functionally, forms an intersubunit bridge (bridge B4) with the 23S rRNA of the 50S subunit in the ribosome. This Neisseria gonorrhoeae (strain ATCC 700825 / FA 1090) protein is Small ribosomal subunit protein uS15.